Reading from the N-terminus, the 365-residue chain is Alanine racemase (365 aa).

Lysine 32 (proton acceptor; specific for D-alanine) is an active-site residue. The residue at position 32 (lysine 32) is an N6-(pyridoxal phosphate)lysine. Arginine 128 contributes to the substrate binding site. Tyrosine 257 (proton acceptor; specific for L-alanine) is an active-site residue. A substrate-binding site is contributed by methionine 305.

It belongs to the alanine racemase family. Requires pyridoxal 5'-phosphate as cofactor.

It catalyses the reaction L-alanine = D-alanine. The protein operates within amino-acid biosynthesis; D-alanine biosynthesis; D-alanine from L-alanine: step 1/1. Functionally, catalyzes the interconversion of L-alanine and D-alanine. May also act on other amino acids. This chain is Alanine racemase (alr), found in Francisella tularensis subsp. holarctica (strain FTNF002-00 / FTA).